The sequence spans 832 residues: Envelope glycoprotein gp160 (832 aa).

The N-terminal stretch at 1–31 (MRVRGMQRNWQHLGKWGLLFLGILIICNAAD) is a signal peptide. At 32-660 (NLWVTVYYGV…ISNWLWYIKI (629 aa)) the chain is on the extracellular side. A disulfide bridge connects residues Cys-53 and Cys-73. N-linked (GlcNAc...) asparagine; by host glycans are attached at residues Asn-87, Asn-129, Asn-132, Asn-135, Asn-146, Asn-150, Asn-177, Asn-178, Asn-188, Asn-225, Asn-232, Asn-253, Asn-267, Asn-280, Asn-286, Asn-292, Asn-322, Asn-329, Asn-345, and Asn-352. Disulfide bonds link Cys-118–Cys-196, Cys-125–Cys-187, Cys-130–Cys-147, Cys-209–Cys-238, and Cys-219–Cys-230. The tract at residues 130–146 (CTNATNNSQEKPGAMQN) is V1. The V2 stretch occupies residues 147–187 (CSFNMTTEVRDKKLKLSALFYRLDIVPIGNNNSSEYRLINC). Residues 287-320 (CTRPNNNTRKGIHLGPGQTFYATGAIIGDIRKAH) are V3. Cys-287 and Cys-321 form a disulfide bridge. Positions 354 to 364 (SSGGDLEITMH) are CD4-binding loop. Disulfide bonds link Cys-368–Cys-422 and Cys-375–Cys-395. The V4 stretch occupies residues 375 to 395 (CDTSGLFNDTGSNNGTITLPC). Residues Asn-382, Asn-388, Asn-419, Asn-425, and Asn-437 are each glycosylated (N-linked (GlcNAc...) asparagine; by host). Positions 438-447 (ESNIETFRPE) are V5. The tract at residues 488–508 (AAGLGALFLGFLGDSREHMGA) is fusion peptide. The tract at residues 550–568 (KQLQARVLAVERYLKDQQL) is immunosuppression. Cys-574 and Cys-580 are oxidised to a cystine. N-linked (GlcNAc...) asparagine; by host glycosylation is found at Asn-587, Asn-592, Asn-601, and Asn-613. Residues 609-643 (KEISNYSNIIYKLIEESQNQQEKNEQELLALDKWA) adopt a coiled-coil conformation. The interval 638 to 659 (ALDKWASLWNWFDISNWLWYIK) is MPER; binding to GalCer. Residues 661–681 (FIMIVGGLIGLRIVFAVLSIV) traverse the membrane as a helical segment. The Cytoplasmic segment spans residues 682-832 (NRVRKGYSPL…IRQGAERALL (151 aa)). The short motif at 688-691 (YSPL) is the YXXL motif; contains endocytosis signal element. Residues 695–717 (TLIPSPRGPDRPEGIEEGGGEQG) form a disordered region. Residue Cys-740 is the site of S-palmitoyl cysteine; by host attachment. Residues 831–832 (LL) carry the Di-leucine internalization motif motif.

It belongs to the HIV-1 env protein family. As to quaternary structure, the mature envelope protein (Env) consists of a homotrimer of non-covalently associated gp120-gp41 heterodimers. The resulting complex protrudes from the virus surface as a spike. There seems to be as few as 10 spikes on the average virion. Interacts with host CD4, CCR5 and CXCR4. Gp120 also interacts with the C-type lectins CD209/DC-SIGN and CLEC4M/DC-SIGNR (collectively referred to as DC-SIGN(R)). Gp120 and gp41 interact with GalCer. Gp120 interacts with host ITGA4/ITGB7 complex; on CD4+ T-cells, this interaction results in rapid activation of integrin ITGAL/LFA-1, which facilitates efficient cell-to-cell spreading of HIV-1. Gp120 interacts with cell-associated heparan sulfate; this interaction increases virus infectivity on permissive cells and may be involved in infection of CD4- cells. In terms of assembly, the mature envelope protein (Env) consists of a homotrimer of non-covalently associated gp120-gp41 heterodimers. The resulting complex protrudes from the virus surface as a spike. There seems to be as few as 10 spikes on the average virion. In terms of processing, highly glycosylated by host. The high number of glycan on the protein is reffered to as 'glycan shield' because it contributes to hide protein sequence from adaptive immune system. Post-translationally, palmitoylation of the transmembrane protein and of Env polyprotein (prior to its proteolytic cleavage) is essential for their association with host cell membrane lipid rafts. Palmitoylation is therefore required for envelope trafficking to classical lipid rafts, but not for viral replication. Specific enzymatic cleavages in vivo yield mature proteins. Envelope glycoproteins are synthesized as an inactive precursor that is heavily N-glycosylated and processed likely by host cell furin in the Golgi to yield the mature SU and TM proteins. The cleavage site between SU and TM requires the minimal sequence [KR]-X-[KR]-R. About 2 of the 9 disulfide bonds of gp41 are reduced by P4HB/PDI, following binding to CD4 receptor.

It localises to the virion membrane. Its subcellular location is the host cell membrane. The protein resides in the host endosome membrane. Functionally, oligomerizes in the host endoplasmic reticulum into predominantly trimers. In a second time, gp160 transits in the host Golgi, where glycosylation is completed. The precursor is then proteolytically cleaved in the trans-Golgi and thereby activated by cellular furin or furin-like proteases to produce gp120 and gp41. Its function is as follows. Attaches the virus to the host lymphoid cell by binding to the primary receptor CD4. This interaction induces a structural rearrangement creating a high affinity binding site for a chemokine coreceptor like CXCR4 and/or CCR5. Acts as a ligand for CD209/DC-SIGN and CLEC4M/DC-SIGNR, which are respectively found on dendritic cells (DCs), and on endothelial cells of liver sinusoids and lymph node sinuses. These interactions allow capture of viral particles at mucosal surfaces by these cells and subsequent transmission to permissive cells. HIV subverts the migration properties of dendritic cells to gain access to CD4+ T-cells in lymph nodes. Virus transmission to permissive T-cells occurs either in trans (without DCs infection, through viral capture and transmission), or in cis (following DCs productive infection, through the usual CD4-gp120 interaction), thereby inducing a robust infection. In trans infection, bound virions remain infectious over days and it is proposed that they are not degraded, but protected in non-lysosomal acidic organelles within the DCs close to the cell membrane thus contributing to the viral infectious potential during DCs' migration from the periphery to the lymphoid tissues. On arrival at lymphoid tissues, intact virions recycle back to DCs' cell surface allowing virus transmission to CD4+ T-cells. Acts as a class I viral fusion protein. Under the current model, the protein has at least 3 conformational states: pre-fusion native state, pre-hairpin intermediate state, and post-fusion hairpin state. During fusion of viral and target intracellular membranes, the coiled coil regions (heptad repeats) assume a trimer-of-hairpins structure, positioning the fusion peptide in close proximity to the C-terminal region of the ectodomain. The formation of this structure appears to drive apposition and subsequent fusion of viral and target cell membranes. Complete fusion occurs in host cell endosomes and is dynamin-dependent, however some lipid transfer might occur at the plasma membrane. The virus undergoes clathrin-dependent internalization long before endosomal fusion, thus minimizing the surface exposure of conserved viral epitopes during fusion and reducing the efficacy of inhibitors targeting these epitopes. Membranes fusion leads to delivery of the nucleocapsid into the cytoplasm. In Human immunodeficiency virus type 1 group M subtype F1 (isolate VI850) (HIV-1), this protein is Envelope glycoprotein gp160.